A 426-amino-acid chain; its full sequence is Diaminobutyrate--2-oxoglutarate transaminase (426 aa).

At Lys-272 the chain carries N6-(pyridoxal phosphate)lysine.

The protein belongs to the class-III pyridoxal-phosphate-dependent aminotransferase family. It depends on pyridoxal 5'-phosphate as a cofactor.

The catalysed reaction is L-2,4-diaminobutanoate + 2-oxoglutarate = L-aspartate 4-semialdehyde + L-glutamate. It participates in amine and polyamine biosynthesis; ectoine biosynthesis; L-ectoine from L-aspartate 4-semialdehyde: step 1/3. Functionally, catalyzes reversively the conversion of L-aspartate beta-semialdehyde (ASA) to L-2,4-diaminobutyrate (DABA) by transamination with L-glutamate. The sequence is that of Diaminobutyrate--2-oxoglutarate transaminase (ectB) from Sporosarcina pasteurii (Bacillus pasteurii).